We begin with the raw amino-acid sequence, 426 residues long: Interferon regulatory factor 8 (426 aa).

A DNA-binding region (IRF tryptophan pentad repeat) is located at residues 7–114 (GRRLRQWLIE…EPYKVYRIVP (108 aa)).

Belongs to the IRF family. Interacts (via C-terminus) with TRIM21 (via C-terminus). Interacts with the BATF-JUNB heterodimer. Interacts with BATF (via bZIP domain); the interaction is direct. Interacts with COPS2. Interacts with SPI1. Post-translationally, ubiquitinated. Ubiquitination by TRIM21 in macrophages, a process that is strongly increased upon interferon gamma stimulation, leds to the enhanced transcriptional activity of target cytokine genes. Ubiquitination leads to its degradation by the proteasome. Sumoylated with SUMO3. Desumoylated by SENP1. Predominantly expressed in lymphoid tissues.

The protein resides in the nucleus. It localises to the cytoplasm. Functionally, transcription factor that specifically binds to the upstream regulatory region of type I interferon (IFN) and IFN-inducible MHC class I genes (the interferon consensus sequence (ICS)). Can both act as a transcriptional activator or repressor. Plays a negative regulatory role in cells of the immune system. Involved in CD8(+) dendritic cell differentiation by forming a complex with the BATF-JUNB heterodimer in immune cells, leading to recognition of AICE sequence (5'-TGAnTCA/GAAA-3'), an immune-specific regulatory element, followed by cooperative binding of BATF and IRF8 and activation of genes. Required for the development of plasmacytoid dendritic cells (pDCs), which produce most of the type I IFN in response to viral infection. Positively regulates macroautophagy in dendritic cells. Acts as a transcriptional repressor of osteoclast differentiation factors such as NFATC1 and EEIG1. The polypeptide is Interferon regulatory factor 8 (Homo sapiens (Human)).